The chain runs to 191 residues: Peptidyl-tRNA hydrolase (191 aa).

Tyr-17 contributes to the tRNA binding site. His-22 acts as the Proton acceptor in catalysis. 3 residues coordinate tRNA: Tyr-68, Asn-70, and Asn-116.

This sequence belongs to the PTH family. In terms of assembly, monomer.

Its subcellular location is the cytoplasm. It catalyses the reaction an N-acyl-L-alpha-aminoacyl-tRNA + H2O = an N-acyl-L-amino acid + a tRNA + H(+). In terms of biological role, hydrolyzes ribosome-free peptidyl-tRNAs (with 1 or more amino acids incorporated), which drop off the ribosome during protein synthesis, or as a result of ribosome stalling. Its function is as follows. Catalyzes the release of premature peptidyl moieties from peptidyl-tRNA molecules trapped in stalled 50S ribosomal subunits, and thus maintains levels of free tRNAs and 50S ribosomes. The sequence is that of Peptidyl-tRNA hydrolase from Mycobacterium ulcerans (strain Agy99).